The following is a 123-amino-acid chain: MDDSKVVGGKVKKPGKRGRKPAKIDLKAKLERSRQSARECRARKKLRYQYLEELVSSRERAICALREELEMYKQWCMAMDQGKIPSEIRALLTGEEQSKPQQNSSRHPKAGKTDANTNSLVGN.

The interval 1–24 is disordered; it reads MDDSKVVGGKVKKPGKRGRKPAKI. Basic residues predominate over residues 10–21; that stretch reads KVKKPGKRGRKP. The region spanning 23–86 is the bZIP domain; sequence KIDLKAKLER…MAMDQGKIPS (64 aa). A basic motif region spans residues 29 to 60; the sequence is KLERSRQSARECRARKKLRYQYLEELVSSRER. Positions 62–69 are leucine-zipper; sequence ICALREEL. The tract at residues 92–123 is disordered; that stretch reads LTGEEQSKPQQNSSRHPKAGKTDANTNSLVGN. A compositionally biased stretch (polar residues) spans 114-123; that stretch reads DANTNSLVGN.

This sequence belongs to the bZIP family. ATF subfamily. As to quaternary structure, interacts with CREB1; regulates CREB1 phosphorylation, stability and transcriptional activity. Post-translationally, phosphorylated by AMPK. Widely expressed with higher expression in adipose tissue, skeletal muscle, and liver (at protein level).

It localises to the nucleus. Functionally, probable regulator of CREB1 transcriptional activity which is involved in adipose cells differentiation. May also play a regulatory role in the cell cycle. This Mus musculus (Mouse) protein is cAMP-responsive element-binding protein-like 2 (Crebl2).